The chain runs to 150 residues: Cell division protein SepF (150 aa).

Belongs to the SepF family. As to quaternary structure, homodimer. Interacts with FtsZ.

It localises to the cytoplasm. Cell division protein that is part of the divisome complex and is recruited early to the Z-ring. Probably stimulates Z-ring formation, perhaps through the cross-linking of FtsZ protofilaments. Its function overlaps with FtsA. The protein is Cell division protein SepF of Clostridium kluyveri (strain NBRC 12016).